Reading from the N-terminus, the 224-residue chain is MLPQGLIVSCQALPDEPLHSSFIMSKLALAAYEGGAVGIRANTKEDIEAIKTEVPLPVIGIVKRDYEGSDVFITATSKEVDELIESGCEVIALDATKQKRPKETLEELVTYIRKHAPNVEIMADISTVEEAVNADKLGFDYVGTTLRGYTSYTKGHILFEDDFAFLKEVLDKVNAKVIAEGNVITPEMYQTVSNLGVYCTVVGGAITRPKQITERFVQAAKDQS.

This sequence belongs to the NanE family.

It catalyses the reaction an N-acyl-D-glucosamine 6-phosphate = an N-acyl-D-mannosamine 6-phosphate. It participates in amino-sugar metabolism; N-acetylneuraminate degradation; D-fructose 6-phosphate from N-acetylneuraminate: step 3/5. Functionally, converts N-acetylmannosamine-6-phosphate (ManNAc-6-P) to N-acetylglucosamine-6-phosphate (GlcNAc-6-P). The protein is Putative N-acetylmannosamine-6-phosphate 2-epimerase of Staphylococcus carnosus (strain TM300).